A 333-amino-acid polypeptide reads, in one-letter code: Sphingomyelinase C (333 aa).

An N-terminal signal peptide occupies residues 1–26 (MKGKLLKGVLSLGVGLGALYSGTSAQ). A disulfide bridge links Cys-150 with Cys-186.

The protein belongs to the neutral sphingomyelinase family. Mg(2+) serves as cofactor. In terms of processing, the N-terminus is blocked.

The protein resides in the secreted. It catalyses the reaction a sphingomyelin + H2O = phosphocholine + an N-acylsphing-4-enine + H(+). Activated by cobalt and manganese ions. Functionally, required, with sphingomyelinase, to effect target cell lysis (hemolysis). The chain is Sphingomyelinase C (cerB) from Bacillus cereus.